We begin with the raw amino-acid sequence, 249 residues long: Triosephosphate isomerase (249 aa).

9 to 11 contributes to the substrate binding site; sequence NWK. The Electrophile role is filled by histidine 94. Glutamate 166 acts as the Proton acceptor in catalysis. Residues glycine 172 and 232 to 233 contribute to the substrate site; that span reads GG.

The protein belongs to the triosephosphate isomerase family. Homodimer.

The protein localises to the cytoplasm. The enzyme catalyses D-glyceraldehyde 3-phosphate = dihydroxyacetone phosphate. It participates in carbohydrate biosynthesis; gluconeogenesis. It functions in the pathway carbohydrate degradation; glycolysis; D-glyceraldehyde 3-phosphate from glycerone phosphate: step 1/1. In terms of biological role, involved in the gluconeogenesis. Catalyzes stereospecifically the conversion of dihydroxyacetone phosphate (DHAP) to D-glyceraldehyde-3-phosphate (G3P). This Xylella fastidiosa (strain M12) protein is Triosephosphate isomerase.